We begin with the raw amino-acid sequence, 201 residues long: Recombination protein RecR (201 aa).

A C4-type zinc finger spans residues Cys60–Cys75. In terms of domain architecture, Toprim spans Gly83–Pro178.

This sequence belongs to the RecR family.

Its function is as follows. May play a role in DNA repair. It seems to be involved in an RecBC-independent recombinational process of DNA repair. It may act with RecF and RecO. This is Recombination protein RecR from Bartonella bacilliformis (strain ATCC 35685 / KC583 / Herrer 020/F12,63).